Reading from the N-terminus, the 377-residue chain is RIB43A-like with coiled-coils protein 2 (377 aa).

2 coiled-coil regions span residues 217–250 (NKNQ…LRGD) and 282–308 (EEIR…RDMD).

Belongs to the RIB43A family. As to quaternary structure, microtubule inner protein component of sperm flagellar doublet microtubules. In terms of tissue distribution, expressed in trachea multiciliated cells.

It localises to the cytoplasm. The protein resides in the cytoskeleton. The protein localises to the cilium axoneme. It is found in the flagellum axoneme. In terms of biological role, microtubule inner protein (MIP) part of the dynein-decorated doublet microtubules (DMTs) in cilia axoneme, which is required for motile cilia beating. The sequence is that of RIB43A-like with coiled-coils protein 2 from Bos taurus (Bovine).